The following is a 125-amino-acid chain: MIEQPRICVQVQSIYVETQSIPEEERFVFAYTVTVRNLGRSNVQLLGRYWLITNSNGRQTEVQGEGVIGEQPLILPGNEFQYTSGAVLETPLGTMEGHYEMIDHLGQAFRTVIPVFRLAIPALIH.

The ApaG domain occupies 1-125; that stretch reads MIEQPRICVQ…FRLAIPALIH (125 aa).

This is Protein ApaG from Yersinia pseudotuberculosis serotype IB (strain PB1/+).